A 421-amino-acid chain; its full sequence is Subtilisin-like protease 2 (421 aa).

The N-terminal stretch at Met-1 to Gly-16 is a signal peptide. The propeptide occupies Asp-17–Ala-122. An Inhibitor I9 domain is found at Gln-36–Ala-122. The region spanning Arg-131–Tyr-421 is the Peptidase S8 domain. Residues Asp-169 and His-201 each act as charge relay system in the active site. 3 N-linked (GlcNAc...) asparagine glycosylation sites follow: Asn-248, Asn-261, and Asn-348. The active-site Charge relay system is Ser-357. N-linked (GlcNAc...) asparagine glycosylation is present at Asn-388.

The protein belongs to the peptidase S8 family.

The protein localises to the secreted. In terms of biological role, secreted subtilisin-like serine protease with keratinolytic activity that contributes to pathogenicity. The sequence is that of Subtilisin-like protease 2 (SUB2) from Trichophyton verrucosum (strain HKI 0517).